A 687-amino-acid polypeptide reads, in one-letter code: MMFRDQVGILASWFKGWNECEQTVALLSLLKRVTRTQARFLQLCLEHSLADCNDIHLLESEANSAAIVSQWQQESKEKVVSLLLSHLPLLQPGNTEAKSEYMRLLQKVLAYSIESNAFIEESRQLLSYALIHPATTLEDRNALALWLSHLEERLASGFRTRPEPSYHSRQGSDEWGGPAELAPGEAGPGWQDKPPRENGHVPFHPSSSVPPAINSIGSNANTGLPCQIHPSPLKRSMSLIPTSPQAPGEWPSPEELGARAAFTTPDHAPLSPQSSVASSGSEQTEEQGSSRNTFQEDGSGMKDVPSWLKSLRLHKYAALFSQMSYEEMMTLTEQHLESQNVTKGARHKIALSIQKLRERQSVLKSLEKDVLEGGNLWNALQELQQIIITPIKAYSVLQATPTAKDEGRGEPLLPGAEPPLTHPGSDKGTEAKDPPAAENYPPPPAPAPSDSSEPAPAPVADGDIPSQFTRVMGKVCTQLLVSRPDEENITSYLQLIEKCLTHEAFTETQKKRLLSWKQQVLKLLRTFPRKAALDMQSYRQQKGWAFGSNSLPIAGSVGMGVARRTQRQFPMPPRALPPGRMGLLSPSGIGGVSPRHALTSPSLGGQGRQNLWFANPGGSNSMPSQSRSSVQRTHSLPVHSSPQAILMFPPDCPVPGPDLEINPTLESLCLSMTEHALGDGTDKTSTI.

A compositionally biased stretch (basic and acidic residues) spans T160 to S172. Residues T160–M301 form a disordered region. At S172 the chain carries Phosphoserine. 2 stretches are compositionally biased toward low complexity: residues W175–W190 and H200–P211. Over residues S215–L224 the composition is skewed to polar residues. Phosphoserine occurs at positions 271, 278, 279, and 281. The segment covering S278 to S290 has biased composition (low complexity). The SAM domain maps to S299–E372. T400 carries the post-translational modification Phosphothreonine. The tract at residues T402–I464 is disordered. The span at G424–P435 shows a compositional bias: basic and acidic residues. A compositionally biased stretch (low complexity) spans P448–D461. S548, S550, S556, S585, and S593 each carry phosphoserine. R595 is modified (asymmetric dimethylarginine). Residues S600 to L636 are disordered. Polar residues predominate over residues G617 to L636. At S621 the chain carries Phosphoserine.

This sequence belongs to the SMAUG family.

Its subcellular location is the cytoplasm. The protein localises to the nucleus. Its function is as follows. Has transcriptional repressor activity. Overexpression inhibits the transcriptional activities of AP-1, p53/TP53 and CDKN1A. In Mus musculus (Mouse), this protein is Protein Smaug homolog 2 (Samd4b).